The sequence spans 531 residues: NADH-quinone oxidoreductase subunit N (531 aa).

The next 13 helical transmembrane spans lie at 13–33 (LAPILIVLGAAVLGVLIEAFA), 45–65 (LALLAAAGAFGAIAWRWAEVI), 85–105 (PALAAQGIIAILAFVGILVIA), 150–170 (LFSVGGMLVFPAAGDLLTLFI), 200–220 (YFLLGAFSSALLLFGIALLYG), 242–262 (GLLVVGLVLLISGLLFKVGAV), 289–309 (VAAFGALLRVVYVVAPAMTWD), 310–330 (IQPFLWVVAVLTMVVGTVLAI), 339–359 (LAYSSVAHAGFLLVGVVAMSP), 365–385 (VFFYLLAYGLATIGAFALVAL), 415–435 (VATVFALYLLSFAGIPLTSGF), 460–480 (ASAAAAFFYVRIIVLMFFTSP), and 496–516 (GFTAVAVALTAAATLVLGVWP).

The protein belongs to the complex I subunit 2 family. In terms of assembly, NDH-1 is composed of 14 different subunits. Subunits NuoA, H, J, K, L, M, N constitute the membrane sector of the complex.

It is found in the cell membrane. The catalysed reaction is a quinone + NADH + 5 H(+)(in) = a quinol + NAD(+) + 4 H(+)(out). In terms of biological role, NDH-1 shuttles electrons from NADH, via FMN and iron-sulfur (Fe-S) centers, to quinones in the respiratory chain. The immediate electron acceptor for the enzyme in this species is believed to be a menaquinone. Couples the redox reaction to proton translocation (for every two electrons transferred, four hydrogen ions are translocated across the cytoplasmic membrane), and thus conserves the redox energy in a proton gradient. The sequence is that of NADH-quinone oxidoreductase subunit N from Beutenbergia cavernae (strain ATCC BAA-8 / DSM 12333 / CCUG 43141 / JCM 11478 / NBRC 16432 / NCIMB 13614 / HKI 0122).